A 537-amino-acid chain; its full sequence is P2Y purinoceptor 4 (537 aa).

Over 1-49 (MTEDIMATSYPTFLTTPYLPMKLLMNLTNDTEDICVFDEGFKFLLLPVS) the chain is Extracellular. Residues N26 and N29 are each glycosylated (N-linked (GlcNAc...) asparagine). A helical transmembrane segment spans residues 50–70 (YSAVFMVGLPLNIAAMWIFIA). Over 71–79 (KMRPWNPTT) the chain is Cytoplasmic. A helical transmembrane segment spans residues 80–100 (VYMFNLALSDTLYVLSLPTLV). Residues 101–118 (YYYADKNNWPFGEVLCKL) lie on the Extracellular side of the membrane. A disulfide bridge links C116 with C193. Residues 119–139 (VRFLFYANLYSSILFLTCISV) form a helical membrane-spanning segment. Residues 140 to 161 (HRYRGVCHPITSLRRMNAKHAY) lie on the Cytoplasmic side of the membrane. The helical transmembrane segment at 162 to 182 (VICALVWLSVTLCLVPNLIFV) threads the bilayer. Residues 183–210 (TVSPKVKNTICHDTTRPEDFARYVEYST) lie on the Extracellular side of the membrane. Residues 211 to 231 (AIMCLLFGIPCLIIAGCYGLM) traverse the membrane as a helical segment. Topologically, residues 232–254 (TRELMKPIVSGNQQTLPSYKKRS) are cytoplasmic. Residues 255–275 (IKTIIFVMIAFAICFMPFHIT) form a helical membrane-spanning segment. Over 276–292 (RTLYYYARLLGIKCYAL) the chain is Extracellular. A helical transmembrane segment spans residues 293 to 316 (NVINVTYKVTRPLASANSCIDPIL). Topologically, residues 317 to 537 (YFLANDRYRR…EKELQNFPKA (221 aa)) are cytoplasmic. Positions 401–505 (NRRSTIKRNS…GEGTSTWNLL (105 aa)) are disordered. Composition is skewed to basic and acidic residues over residues 409-423 (NSTDKNDMKENRHGE) and 431-447 (VVEKEDYETKRENRKTT). Positions 448-465 (EQSSKTNAEQDELQTQID) are enriched in polar residues.

It belongs to the G-protein coupled receptor 1 family.

The protein resides in the cell membrane. Functionally, receptor for extracellular ATP, UTP, CTP, GTP and ITP. The activity of this receptor is mediated by G proteins which activate a phosphatidylinositol-calcium second messenger system. May play a key role in the early development of neural tissue. The protein is P2Y purinoceptor 4 (p2ry4) of Xenopus laevis (African clawed frog).